A 118-amino-acid chain; its full sequence is Large ribosomal subunit protein bL20 (118 aa).

Belongs to the bacterial ribosomal protein bL20 family.

Functionally, binds directly to 23S ribosomal RNA and is necessary for the in vitro assembly process of the 50S ribosomal subunit. It is not involved in the protein synthesizing functions of that subunit. This is Large ribosomal subunit protein bL20 from Francisella tularensis subsp. tularensis (strain FSC 198).